We begin with the raw amino-acid sequence, 326 residues long: uncharacterized protein (326 aa).

Positions 293–326 are disordered; the sequence is HRNYDANHSTSGEEENSGSRSRIAELSQSTIHRR.

This is an uncharacterized protein from Oryza latifolia (Indian wild rice).